The chain runs to 427 residues: Adenylosuccinate synthetase (427 aa).

GTP contacts are provided by residues 12–18 and 40–42; these read GDEGKGK and GHT. The active-site Proton acceptor is the D13. Residues D13 and G40 each contribute to the Mg(2+) site. Residues 13 to 16, 38 to 41, T128, R142, Q223, T238, and R302 contribute to the IMP site; these read DEGK and NAGH. The active-site Proton donor is H41. 298–304 contacts substrate; sequence VTTGRAR. Residues R304, 330-332, and 412-414 contribute to the GTP site; these read KLD and GVG.

This sequence belongs to the adenylosuccinate synthetase family. As to quaternary structure, homodimer. It depends on Mg(2+) as a cofactor.

It is found in the cytoplasm. The enzyme catalyses IMP + L-aspartate + GTP = N(6)-(1,2-dicarboxyethyl)-AMP + GDP + phosphate + 2 H(+). Its pathway is purine metabolism; AMP biosynthesis via de novo pathway; AMP from IMP: step 1/2. Functionally, plays an important role in the de novo pathway of purine nucleotide biosynthesis. Catalyzes the first committed step in the biosynthesis of AMP from IMP. This chain is Adenylosuccinate synthetase, found in Parafrankia sp. (strain EAN1pec).